The chain runs to 260 residues: ProSAAS (260 aa).

An N-terminal signal peptide occupies residues 1 to 33 (MAGSPLLCGPRAGGVGLLVLLLLGLLRLPPTLS). The proSAAS(1-180) stretch occupies residues 34–215 (ARPVKEPRSL…SSEPEAAPAP (182 aa)). Disordered stretches follow at residues 162–187 (AALR…ADET) and 206–234 (SSEP…PPEN). Residues 221–260 (AVDQDLGPEVPPENVLGALLRVKRLENSSPQAPARRLLPP) form a C-terminal inhibitory domain; interacts with PCSK1 region. Positions 239-244 (LLRVKR) match the Sufficient for inhibition of PCSK1 motif.

As to quaternary structure, interacts via the C-terminal inhibitory domain with PCSK1 65 kDa form. Post-translationally, proteolytically cleaved in the Golgi. Big SAAS, Little SAAS, PEN and Big LEN are the major processed peptides in proSAAS-overexpressing PC-12 phaeochromocytoma cells (lacking PCSK1 and PCSK2 endopeptidases). Peptides corresponding to PEN and a proSAAS aa 40-59 have been detected in wild-type PC-12 cells. Expressed in adult brain (all major structural regions), adrenal gland (medulla) and spinal cord (dorsal and ventral horn). Expressed in pancreatic islands.

It is found in the secreted. It localises to the golgi apparatus. The protein resides in the trans-Golgi network. May function in the control of the neuroendocrine secretory pathway. Proposed be a specific endogenous inhibitor of PCSK1. ProSAAS and Big PEN-LEN, both containing the C-terminal inhibitory domain, but not the processed peptides reduce PCSK1 activity in the endoplasmic reticulum and Golgi. It reduces the activity of the 87 kDa form but not the autocatalytically derived 65 kDa form of PCSK1. Subsequent processing of proSAAS may eliminate the inhibition. Slows down convertase-mediated processing of proopiomelanocortin and proenkephalin. May control the intracellular timing of PCSK1 rather than its total level of activity. Functionally, endogenous ligand for GPR171. Neuropeptide involved in the regulation of feeding. The polypeptide is ProSAAS (Pcsk1n) (Rattus norvegicus (Rat)).